Consider the following 174-residue polypeptide: MKDLTMLLHELKDMSFFNKGDICLIGCSTSEVIGEKIGTVGSMEVAETIFNALDVVSKETGVTFAFQGCEHINRAITIEKSQFNPLTMEEVSVVPDVHAGGSLATYAFQHMKDPIVVEHITVPCGIDIGQTLIGMHIKHVCVPVRTSVKQVGQAIVTIATSRPKKIGGERAKYQ.

The protein belongs to the UPF0340 family.

In Staphylococcus aureus (strain MRSA252), this protein is UPF0340 protein SAR2202.